A 282-amino-acid chain; its full sequence is Pantothenate synthetase (282 aa).

30 to 37 provides a ligand contact to ATP; it reads MGYLHEGH. H37 acts as the Proton donor in catalysis. (R)-pantoate is bound at residue Q61. A beta-alanine-binding site is contributed by Q61. 148–151 serves as a coordination point for ATP; it reads GQKD. Q154 lines the (R)-pantoate pocket. Residues V177 and 185 to 188 contribute to the ATP site; that span reads MSSR.

The protein belongs to the pantothenate synthetase family. In terms of assembly, homodimer.

Its subcellular location is the cytoplasm. It carries out the reaction (R)-pantoate + beta-alanine + ATP = (R)-pantothenate + AMP + diphosphate + H(+). Its pathway is cofactor biosynthesis; (R)-pantothenate biosynthesis; (R)-pantothenate from (R)-pantoate and beta-alanine: step 1/1. Functionally, catalyzes the condensation of pantoate with beta-alanine in an ATP-dependent reaction via a pantoyl-adenylate intermediate. This chain is Pantothenate synthetase, found in Syntrophomonas wolfei subsp. wolfei (strain DSM 2245B / Goettingen).